A 252-amino-acid polypeptide reads, in one-letter code: Type II secretion system protein N (252 aa).

The Cytoplasmic segment spans residues 1 to 4 (MKQK). Residues 5–25 (VLIAALFLVAYLGFLLVKLPA) form a helical membrane-spanning segment. Residues 26 to 252 (TLVVRHLPLP…RFPLRYQGRI (227 aa)) are Periplasmic-facing.

It belongs to the GSP N family.

The protein resides in the cell inner membrane. In terms of biological role, involved in a type II secretion system (T2SS, formerly general secretion pathway, GSP) for the export of proteins. In Aeromonas hydrophila, this protein is Type II secretion system protein N (exeN).